The primary structure comprises 540 residues: Chaperonin GroEL (540 aa).

Residues Thr30–Pro33, Lys51, Asp87–Thr91, Gly415, and Asp495 contribute to the ATP site.

Belongs to the chaperonin (HSP60) family. Forms a cylinder of 14 subunits composed of two heptameric rings stacked back-to-back. Interacts with the co-chaperonin GroES.

Its subcellular location is the cytoplasm. It carries out the reaction ATP + H2O + a folded polypeptide = ADP + phosphate + an unfolded polypeptide.. Together with its co-chaperonin GroES, plays an essential role in assisting protein folding. The GroEL-GroES system forms a nano-cage that allows encapsulation of the non-native substrate proteins and provides a physical environment optimized to promote and accelerate protein folding. This Erwinia aphidicola protein is Chaperonin GroEL.